A 325-amino-acid polypeptide reads, in one-letter code: Thiamine-monophosphate kinase (325 aa).

Mg(2+)-binding residues include Asp30, Ser45, Thr46, and Asp47. His54 is a binding site for substrate. Residues Asp75 and Asp122 each coordinate Mg(2+). ATP contacts are provided by residues 121-122 and Arg146; that span reads GD. Asp212 contributes to the Mg(2+) binding site. Ser214 is an ATP binding site. Asp215 lines the Mg(2+) pocket. Substrate is bound by residues Glu263 and Tyr319.

The protein belongs to the thiamine-monophosphate kinase family.

It carries out the reaction thiamine phosphate + ATP = thiamine diphosphate + ADP. It participates in cofactor biosynthesis; thiamine diphosphate biosynthesis; thiamine diphosphate from thiamine phosphate: step 1/1. Functionally, catalyzes the ATP-dependent phosphorylation of thiamine-monophosphate (TMP) to form thiamine-pyrophosphate (TPP), the active form of vitamin B1. The chain is Thiamine-monophosphate kinase (thiL) from Salmonella typhimurium (strain LT2 / SGSC1412 / ATCC 700720).